The primary structure comprises 1351 residues: ABC transporter C family member 6 (1351 aa).

An ABC transmembrane type-1 1 domain is found at 112 to 397; it reads NKYALVSNLF…LPYDIFKAIG (286 aa). A run of 3 helical transmembrane segments spans residues 120–140, 149–169, and 248–268; these read LFIIIFTFLSPICLKFLINYI, SILKGILLCCLLCLCVLGQSI, and LLCYVVGPSGLVGFGVMVIAL. In terms of domain architecture, ABC transporter 1 spans 474 to 700; that stretch reads NQDESINKKE…GIDFKSILKT (227 aa). 510–517 contributes to the ATP binding site; sequence GVVGSGKT. Residues 701–734 adopt a coiled-coil conformation; it reads KEIKKNVENETDSEELIKNEIEIENEIIDVNNAI. The next 6 membrane-spanning stretches (helical) occupy residues 771 to 791, 815 to 835, 904 to 924, 977 to 999, 1002 to 1022, and 1025 to 1045; these read GSSGVTLFITISLFFVGQAIF, IGYYLLIFGTFVVILMIRILL, LISIVFIIPIMVIPLIILSIA, MFDNININLGCFFYSFAVHRWVS, LEVMGWIMVFFTSLIATLFIS, and GLAALSVTTALSLNGYLSWGI. In terms of domain architecture, ABC transmembrane type-1 2 spans 777–1060; it reads LFITISLFFV…LEVKMNSFQR (284 aa). One can recognise an ABC transporter 2 domain in the interval 1101–1336; that stretch reads IEFKNVEIKY…PNSKFNKLIK (236 aa). ATP is bound at residue 1135-1142; the sequence is GRTGAGKT.

Belongs to the ABC transporter superfamily. ABCC family. Conjugate transporter (TC 3.A.1.208) subfamily.

Its subcellular location is the membrane. The protein is ABC transporter C family member 6 (abcC6) of Dictyostelium discoideum (Social amoeba).